The chain runs to 448 residues: Protein EVI2B (448 aa).

The signal sequence occupies residues 1-21 (MDPKYFILILFCGHLNNTFFS). 2 N-linked (GlcNAc...) asparagine glycosylation sites follow: Asn-16 and Asn-50. Residues 22-202 (KTETITTEKQ…QTPQKNNYNS (181 aa)) lie on the Extracellular side of the membrane. The disordered stretch occupies residues 74-108 (AKVTAGQPTPAVYTSSEKPEAHTSAGQPLAYNTKQ). Residues 97–108 (SAGQPLAYNTKQ) show a composition bias toward polar residues. Asn-114 carries an N-linked (GlcNAc...) asparagine glycan. Residues 203 to 226 (IAAILIGVLLTSMLVAIIIIVLWK) traverse the membrane as a helical segment. Residues 227 to 448 (CLRKPVLNDQ…SLPPPPAELL (222 aa)) lie on the Cytoplasmic side of the membrane. Thr-249 is subject to Phosphothreonine. A phosphoserine mark is found at Ser-268, Ser-271, Ser-278, and Ser-294. Disordered regions lie at residues 298-372 (IEDS…DSTS) and 427-448 (SIPP…AELL). Composition is skewed to polar residues over residues 313–333 (VNGT…VSSS) and 350–372 (QESN…DSTS).

Bone marrow, peripheral blood mononuclear cells, fibroblasts and Epstein-Barr virus-transformed lymphoblastoid cell lines. Strongly expressed in granulocytic cells, and weakly on lymphocytes cells.

The protein localises to the membrane. Required for granulocyte differentiation and functionality of hematopoietic progenitor cells through the control of cell cycle progression and survival of hematopoietic progenitor cells. This chain is Protein EVI2B, found in Homo sapiens (Human).